A 594-amino-acid chain; its full sequence is Fidgetin-like protein 1 (594 aa).

Disordered stretches follow at residues 1–79 (MYSP…DDEL) and 239–261 (QSIG…KRCS). Residues 56–73 (PSDSAQQQPPFKSRSQQN) are compositionally biased toward polar residues. ATP contacts are provided by residues Ala319 and 359–364 (GTGKTM).

It belongs to the AAA ATPase family. In terms of assembly, hexamer. The cofactor is Mg(2+). Expressed in germ cells.

The protein localises to the nucleus. The enzyme catalyses ATP + H2O = ADP + phosphate + H(+). Functionally, has a role in spindle assembly which acts in the progression through mitosis during embryogenesis. Required for fertility. This chain is Fidgetin-like protein 1 (figl-1), found in Caenorhabditis elegans.